The sequence spans 91 residues: UPF0213 protein NMA2126 (91 aa).

In terms of domain architecture, GIY-YIG spans 4–83 (SNWSLYLILC…AAQKRKLWEQ (80 aa)).

This sequence belongs to the UPF0213 family.

The chain is UPF0213 protein NMA2126 from Neisseria meningitidis serogroup A / serotype 4A (strain DSM 15465 / Z2491).